A 366-amino-acid polypeptide reads, in one-letter code: G kinase-anchoring protein 1 (366 aa).

The tract at residues 1–95 (MASAVLSSVL…SHSVCNVQHE (95 aa)) is interaction with IRS1. Positions 20–105 (QVDSGSGSDS…LSLPNPVQKE (86 aa)) are disordered. Residues Ser-23, Ser-25, and Ser-27 each carry the phosphoserine modification. Polar residues predominate over residues 39–50 (NGKSQTLGNKST). The stretch at 46–77 (GNKSTANEKKREKRRKKKEQQQSEANELRNLA) forms a coiled coil. Residue Ser-106 is modified to Phosphoserine; by PKG. Coiled coils occupy residues 129–160 (DLEK…QTKV), 250–299 (LKDG…MLQE), and 326–353 (VSSL…YQGG).

This sequence belongs to the GKAP1 family. As to quaternary structure, interacts with PRKG1 and IRS1.

The protein localises to the golgi apparatus. Regulates insulin-dependent IRS1 tyrosine phosphorylation in adipocytes by modulating the availability of IRS1 to IR tyrosine kinase. Its association with IRS1 is required for insulin-induced translocation of SLC2A4 to the cell membrane. Involved in TNF-induced impairment of insulin-dependent IRS1 tyrosine phosphorylation. The sequence is that of G kinase-anchoring protein 1 (Gkap1) from Rattus norvegicus (Rat).